The sequence spans 359 residues: MSQPNSILMSYGWDPSIYLEEPKLLEGLKPGRVLAVYGEYSKIIIEQGEKKGIFSGALMASGESIVTGDWVLIREIEGDELCIVEKILPRKTFLRRSNPGKRKGSQAIASNIDLLLVIMGLDNDYSPRRIERYLFLAKVSGAQVTIVLNKKDLCMDPENKFMEIKMIAGETPIEMISALDLKQTRTILQWIDPGKTIAFLGSSGAGKSTIINSLLGGEIQKTNEVKVSDGTGKHTTTRRELFLLPSGGVLMDNPGIREVGLFSEGSEDELEEVFPEIAVAAEECRFNDCSHNEEPNCGVVAAVKDGRISEARYFSYLKLSKELMAYQALNDPEEARKKKQKDKQMSKALQKRLKDKGRK.

Residues 101 to 259 (KRKGSQAIAS…LMDNPGIREV (159 aa)) form the CP-type G domain. GTP contacts are provided by residues 149-152 (NKKD) and 201-209 (GSSGAGKST). 4 residues coordinate Zn(2+): Cys-284, Cys-289, His-291, and Cys-297. Residues 331–359 (DPEEARKKKQKDKQMSKALQKRLKDKGRK) are disordered. The span at 349 to 359 (LQKRLKDKGRK) shows a compositional bias: basic residues.

The protein belongs to the TRAFAC class YlqF/YawG GTPase family. RsgA subfamily. As to quaternary structure, monomer. Associates with 30S ribosomal subunit, binds 16S rRNA. Zn(2+) is required as a cofactor.

It localises to the cytoplasm. In terms of biological role, one of several proteins that assist in the late maturation steps of the functional core of the 30S ribosomal subunit. Helps release RbfA from mature subunits. May play a role in the assembly of ribosomal proteins into the subunit. Circularly permuted GTPase that catalyzes slow GTP hydrolysis, GTPase activity is stimulated by the 30S ribosomal subunit. The polypeptide is Small ribosomal subunit biogenesis GTPase RsgA (Leptospira interrogans serogroup Icterohaemorrhagiae serovar copenhageni (strain Fiocruz L1-130)).